The primary structure comprises 371 residues: Phosphate acyltransferase (371 aa).

The protein belongs to the PlsX family. In terms of assembly, homodimer. Probably interacts with PlsY.

The protein resides in the cytoplasm. The enzyme catalyses a fatty acyl-[ACP] + phosphate = an acyl phosphate + holo-[ACP]. Its pathway is lipid metabolism; phospholipid metabolism. Functionally, catalyzes the reversible formation of acyl-phosphate (acyl-PO(4)) from acyl-[acyl-carrier-protein] (acyl-ACP). This enzyme utilizes acyl-ACP as fatty acyl donor, but not acyl-CoA. The protein is Phosphate acyltransferase of Ruegeria pomeroyi (strain ATCC 700808 / DSM 15171 / DSS-3) (Silicibacter pomeroyi).